Reading from the N-terminus, the 843-residue chain is Proto-oncogene vav (843 aa).

The region spanning 1 to 119 (MELWRQCTHW…YTLSALSWTP (119 aa)) is the Calponin-homology (CH) domain. Residues 194-373 (KRCCCLREIQ…RDLAQCVNEV (180 aa)) enclose the DH domain. Positions 402–504 (RPKIDGELKI…WMEQFEMAIS (103 aa)) constitute a PH domain. The Phorbol-ester/DAG-type zinc-finger motif lies at 515–564 (GHDFQMFSFEETTSCKACQMLLRGTFYQGYRCYRCRAPAHKECLGRVPPC). Positions 590 to 658 (LGLPKMEVCQ…PCNRVRPYVH (69 aa)) constitute an SH3 1 domain. In terms of domain architecture, SH2 spans 669–763 (WYAGPMERAG…SLDTTLQFPY (95 aa)). The SH3 2 domain maps to 780-840 (KYFGTAKARY…PSNYVEEDYS (61 aa)). Tyrosine 824 and tyrosine 842 each carry phosphotyrosine.

In terms of assembly, interacts with SHB. Interacts with APS, DOCK2, GRB2, GRB3, DOCK2, SLA, TEC and ZNF655/VIK. Interacts with SIAH2; without leading to its degradation. Associates with BLNK, PLCG1, GRB2 and NCK1 in a B-cell antigen receptor-dependent fashion. Interacts with CBLB; which inhibits tyrosine phosphorylation and down-regulates activity. May interact with CCPG1. Interacts with CLNK. Interacts with THEMIS2. Interacts with NEK3 and this interaction is prolactin-dependent. Interacts with ITK. Interacts with PTK2B/PYK2. Interacts with HCK. Interacts with PTK2B/PYK2. Interacts (via SH2 domain) with SYK. Interacts with ANKRD54. Interacts with CD6. Interacts with LCP2; this interaction plays a role in TCR-mediated cytokine production. Phosphorylated by FYN. Phosphorylated on tyrosine residues by HCK in response to IFNG and bacterial lipopolysaccharide (LPS).

Its function is as follows. Couples tyrosine kinase signals with the activation of the Rho/Rac GTPases, thus leading to cell differentiation and/or proliferation. This chain is Proto-oncogene vav (Vav1), found in Rattus norvegicus (Rat).